The following is a 653-amino-acid chain: 4-alpha-glucanotransferase (653 aa).

E123 (nucleophile) is an active-site residue. The active-site Proton donor is the D214.

This sequence belongs to the glycosyl hydrolase 57 family.

It catalyses the reaction Transfers a segment of a (1-&gt;4)-alpha-D-glucan to a new position in an acceptor, which may be glucose or a (1-&gt;4)-alpha-D-glucan.. The sequence is that of 4-alpha-glucanotransferase from Thermococcus kodakarensis (strain ATCC BAA-918 / JCM 12380 / KOD1) (Pyrococcus kodakaraensis (strain KOD1)).